Reading from the N-terminus, the 256-residue chain is Deoxyribose-phosphate aldolase (256 aa).

The active-site Proton donor/acceptor is Asp102. Lys165 acts as the Schiff-base intermediate with acetaldehyde in catalysis. The active-site Proton donor/acceptor is Lys197.

It belongs to the DeoC/FbaB aldolase family. DeoC type 2 subfamily.

The protein localises to the cytoplasm. It catalyses the reaction 2-deoxy-D-ribose 5-phosphate = D-glyceraldehyde 3-phosphate + acetaldehyde. It functions in the pathway carbohydrate degradation; 2-deoxy-D-ribose 1-phosphate degradation; D-glyceraldehyde 3-phosphate and acetaldehyde from 2-deoxy-alpha-D-ribose 1-phosphate: step 2/2. Catalyzes a reversible aldol reaction between acetaldehyde and D-glyceraldehyde 3-phosphate to generate 2-deoxy-D-ribose 5-phosphate. The polypeptide is Deoxyribose-phosphate aldolase (Shewanella baltica (strain OS155 / ATCC BAA-1091)).